The chain runs to 870 residues: A-kinase anchor protein 2 (870 aa).

Disordered stretches follow at residues 14-43 (PGIT…DHHE) and 103-165 (IEKA…SSRD). Position 122 is a phosphoserine (Ser-122). Over residues 133 to 151 (GHSTDQPQDMLGNSLQAPA) the composition is skewed to polar residues. A Phosphoserine modification is found at Ser-152. A compositionally biased stretch (low complexity) spans 152–161 (SPSSSTSSHC). Lys-174 is covalently cross-linked (Glycyl lysine isopeptide (Lys-Gly) (interchain with G-Cter in SUMO1); alternate). Residue Lys-174 forms a Glycyl lysine isopeptide (Lys-Gly) (interchain with G-Cter in SUMO2); alternate linkage. Positions 213–307 (EEMIELEKER…QQQQLSTSQL (95 aa)) form a coiled coil. Positions 233–324 (KNPGIAAKWW…EHLDSIEHTK (92 aa)) are disordered. Over residues 259–274 (LESHRKYKERKEKRAQ) the composition is skewed to basic and acidic residues. The span at 275 to 302 (QEQLQLQQQQQQQLQQLQQLQQQQQQQL) shows a compositional bias: low complexity. Residues 313-324 (AHEHLDSIEHTK) are compositionally biased toward basic and acidic residues. Ser-347 bears the Phosphoserine mark. Residues 409–436 (ESQSAGAGTGNAATQGKEGPYSEPSKRG) are disordered. The segment covering 410–424 (SQSAGAGTGNAATQG) has biased composition (low complexity). A phosphoserine mark is found at Ser-472, Ser-476, and Ser-528. A compositionally biased stretch (polar residues) spans 506–543 (FSMDNISDSGASNETPNALQENSLADFSLPQTPQTDNP). Disordered stretches follow at residues 506–577 (FSMD…DPLE) and 595–688 (QVDK…RPEG). Phosphothreonine is present on Thr-537. The PKA-RII subunit binding domain stretch occupies residues 576-589 (LEYQAGLLVQNAIQ). The segment covering 595-608 (QVDKAEVHTSKEGS) has biased composition (basic and acidic residues). Ser-641 is subject to Phosphoserine. Basic and acidic residues predominate over residues 644–665 (QEKRDVLPKILPGEDKTLREKG). Residues 720 to 755 (KLRSRKQRTLSMIEEEIRAAQEREEELKRQRQVRQS) are a coiled coil. Residues Ser-730, Ser-758, Ser-789, and Ser-796 each carry the phosphoserine modification. A disordered region spans residues 740–814 (QEREEELKRQ…EAAGAQRPKN (75 aa)). Over residues 755-774 (STPSPRAQNAPSLPSRTTCY) the composition is skewed to polar residues.

Its subcellular location is the apical cell membrane. Its function is as follows. Binds to regulatory subunit (RII) of protein kinase A. May be involved in establishing polarity in signaling systems or in integrating PKA-RII isoforms with downstream effectors to capture, amplify and focus diffuse, trans-cellular signals carried by cAMP. Binds to and modulates the structure of the actin cytoskeleton. In Rattus norvegicus (Rat), this protein is A-kinase anchor protein 2.